Consider the following 651-residue polypeptide: Protein RcaC (651 aa).

The Response regulatory 1 domain occupies 2-116; it reads KILLVEDDDV…ELIARIRALL (115 aa). At aspartate 51 the chain carries 4-aspartylphosphate. The ompR/PhoB-type DNA-binding region spans 124-223; sequence FPLLTWGDLL…MHGRGYYLKA (100 aa). 2 Response regulatory domains span residues 384 to 519 and 527 to 643; these read LLLM…VNLL and KVMI…LRRL.

In terms of biological role, required for chromatic adaptation. Thought to be a positive regulator of phycobiliproteins. The sequence is that of Protein RcaC (rcaC) from Microchaete diplosiphon (Fremyella diplosiphon).